Consider the following 343-residue polypeptide: N-acetyl-gamma-glutamyl-phosphate reductase (343 aa).

C147 is a catalytic residue.

The protein belongs to the NAGSA dehydrogenase family. Type 1 subfamily.

Its subcellular location is the cytoplasm. The enzyme catalyses N-acetyl-L-glutamate 5-semialdehyde + phosphate + NADP(+) = N-acetyl-L-glutamyl 5-phosphate + NADPH + H(+). It functions in the pathway amino-acid biosynthesis; L-arginine biosynthesis; N(2)-acetyl-L-ornithine from L-glutamate: step 3/4. Functionally, catalyzes the NADPH-dependent reduction of N-acetyl-5-glutamyl phosphate to yield N-acetyl-L-glutamate 5-semialdehyde. The polypeptide is N-acetyl-gamma-glutamyl-phosphate reductase (Listeria monocytogenes serotype 4a (strain HCC23)).